A 512-amino-acid chain; its full sequence is MQPDLNPNTTQPLIALTGIGKRFPGVQALDDCRFDLRAGEVHALMGENGAGKSTLMKILAGVYQRDAGEIRMDGRPVEIADPRAAQALGIGIIHQELNLMNHLSVAQNIFIGREPRGRFGVFVDEEKLNRDAAAIFQRMRLDLDPRTPVGRLTVAKQQMVEIAKALSFDSRALIMDEPTAALNNAEIAELFRIIRDLRAHGVGIIYISHKMDELRQIADRVTVMRDGKYVATVPMADTSMESIISMMVGRQLDTETRTPPDTSGNEIALEVRGLSRGRAIRDVGFTLRRGEILGFAGLMGAGRTEVARAVFGADPVDAGEIRVHGRAVTIRTPADAVKYGIGYLSEDRKHFGLAIGMDVQNNIALSSMRRFVRRGLFLDARGMRDAARSYVRQLAIRTPSVAQPARLLSGGNQQKIVIAKWLLRDCDILFFDEPTRGIDVGAKSEIYKLLDALAADGKAIVMISSELPEVLRMSHRILVMCEGRVTGELRAADATQEKIMQLATQRESTVLS.

2 ABC transporter domains span residues 14 to 251 and 262 to 507; these read IALT…VGRQ and TSGN…TQRE. ATP is bound at residue 46-53; that stretch reads GENGAGKS.

This sequence belongs to the ABC transporter superfamily. Carbohydrate importer 2 (CUT2) (TC 3.A.1.2) family.

It localises to the cell inner membrane. The catalysed reaction is D-ribose(out) + ATP + H2O = D-ribose(in) + ADP + phosphate + H(+). It catalyses the reaction D-galactose(out) + ATP + H2O = D-galactose(in) + ADP + phosphate + H(+). Part of an ABC transporter complex involved in carbohydrate import. Could be involved in ribose, galactose and/or methyl galactoside import. Responsible for energy coupling to the transport system. The chain is Putative ribose/galactose/methyl galactoside import ATP-binding protein 2 from Burkholderia cenocepacia (strain HI2424).